The primary structure comprises 137 residues: ATP synthase epsilon chain (137 aa).

Belongs to the ATPase epsilon chain family. In terms of assembly, F-type ATPases have 2 components, CF(1) - the catalytic core - and CF(0) - the membrane proton channel. CF(1) has five subunits: alpha(3), beta(3), gamma(1), delta(1), epsilon(1). CF(0) has three main subunits: a, b and c.

It localises to the cell membrane. Produces ATP from ADP in the presence of a proton gradient across the membrane. In Streptococcus agalactiae serotype III (strain NEM316), this protein is ATP synthase epsilon chain.